Consider the following 330-residue polypeptide: Protein rlx (330 aa).

The disordered stretch occupies residues 220–330; sequence LGEDYDKGGL…EKTRGFDLEL (111 aa). 2 stretches are compositionally biased toward basic and acidic residues: residues 237-269 and 279-330; these read NEQREEQARQRELEQARREKIKRDKEREKEWAR and QNRE…DLEL.

In terms of biological role, this protein is probably required for relaxation complex formation and plasmid mobilization by conjugative plasmids. In Staphylococcus aureus, this protein is Protein rlx (rlx).